The following is a 695-amino-acid chain: Probable serine/threonine-protein kinase abkD (695 aa).

Residues T105–K119 show a composition bias toward polar residues. The tract at residues T105–L149 is disordered. Positions S118–R150 form a coiled coil. The segment covering Q120 to Q139 has biased composition (low complexity). A helical transmembrane segment spans residues T177–E193. Positions D317–G695 constitute a Protein kinase domain. Residues I323–V331 and K345 contribute to the ATP site. D477 serves as the catalytic Proton acceptor.

The protein belongs to the protein kinase superfamily. ADCK protein kinase family.

The protein localises to the membrane. In Dictyostelium discoideum (Social amoeba), this protein is Probable serine/threonine-protein kinase abkD (abkD).